A 318-amino-acid chain; its full sequence is Probable carboxylesterase 1 (318 aa).

At methionine 1 the chain carries N-acetylmethionine. The Involved in the stabilization of the negatively charged intermediate by the formation of the oxyanion hole motif lies at 79–81 (HGG). Residues serine 163, aspartate 258, and histidine 290 contribute to the active site.

It belongs to the 'GDXG' lipolytic enzyme family. Expressed in roots, stems, flowers and siliques.

It carries out the reaction a carboxylic ester + H2O = an alcohol + a carboxylate + H(+). Functionally, carboxylesterase acting on esters with varying acyl chain length. This is Probable carboxylesterase 1 (CXE1) from Arabidopsis thaliana (Mouse-ear cress).